The sequence spans 66 residues: U10-theraphotoxin-Cg1a 3 (66 aa).

The N-terminal stretch at 1–21 (MKTSVLFVIFGLALLFCLSFA) is a signal peptide. Residues 22–29 (DELEDTGR) constitute a propeptide that is removed on maturation. Disulfide bonds link C31-C46, C38-C51, and C45-C58.

It belongs to the neurotoxin 10 (Hwtx-1) family. 29 (Jztx-13) subfamily. As to expression, expressed by the venom gland.

It localises to the secreted. Functionally, probable ion channel inhibitor. The sequence is that of U10-theraphotoxin-Cg1a 3 from Chilobrachys guangxiensis (Chinese earth tiger tarantula).